The primary structure comprises 385 residues: MKDSFLFTSESVTEGHPDKMADQISDAVLDYIIERDKKAKVACETLVSNGFCVITGELKTSIYAPMQEIAREVVKKIGYTDALYGFDYRSAAVLNGIGEQSPDINQGVDREDGEIGAGDQGLVFGYACKETQMLMPLPIHLAHQLTFALAQKRKDNTLPFLRPDGKSQVSVRYENNKPISIDTIVISTQHSPEVSQKHLKEAVIEEIVYKVLPKEYLHDNIKFFVNPTGKFVIGGPQGDAGLTGRKIIVDTYGGSCPHGGGAFSGKDPSKVDRSAAYAARYVAKNLVASGVCDRATVQLAYAIGVVEPVSIYVNTHNTSKYSSAELEKCVKLVFKLTPKGIIESLDLLRPIYSLTSSYGHFGRELEAFTWEKTNKAEEIKAFFKH.

H16 is an ATP binding site. D18 serves as a coordination point for Mg(2+). E44 contributes to the K(+) binding site. Residues E57 and Q100 each contribute to the L-methionine site. Positions 100-110 are flexible loop; sequence QSPDINQGVDR. Residues 164 to 166, 230 to 231, D239, 245 to 246, A262, and K266 contribute to the ATP site; these read DGK, KF, and RK. D239 contributes to the L-methionine binding site. L-methionine is bound at residue K270.

The protein belongs to the AdoMet synthase family. As to quaternary structure, homotetramer; dimer of dimers. Mg(2+) is required as a cofactor. It depends on K(+) as a cofactor.

The protein resides in the cytoplasm. It catalyses the reaction L-methionine + ATP + H2O = S-adenosyl-L-methionine + phosphate + diphosphate. The protein operates within amino-acid biosynthesis; S-adenosyl-L-methionine biosynthesis; S-adenosyl-L-methionine from L-methionine: step 1/1. Its function is as follows. Catalyzes the formation of S-adenosylmethionine (AdoMet) from methionine and ATP. The overall synthetic reaction is composed of two sequential steps, AdoMet formation and the subsequent tripolyphosphate hydrolysis which occurs prior to release of AdoMet from the enzyme. The polypeptide is S-adenosylmethionine synthase (Helicobacter acinonychis (strain Sheeba)).